A 184-amino-acid polypeptide reads, in one-letter code: Troponin I, slow skeletal muscle (184 aa).

Pro-1 carries the post-translational modification N-acetylproline; partial. Residues 1-45 (PEVERKSKITASRKLLKSLMLAKAKECQQEHEAREAEKVRYLAER) form an involved in binding TNC region. Ser-55 carries the post-translational modification Phosphoserine. Positions 94-115 (LKLKVLDLRGKFKRPPLRRVRV) are involved in binding TNC and actin.

This sequence belongs to the troponin I family. Binds to actin and tropomyosin. In the muscle sample, approximately 25% of the chains were blocked. Pro-1 is probably acetylated. In terms of processing, the N-terminus is blocked.

Functionally, troponin I is the inhibitory subunit of troponin, the thin filament regulatory complex which confers calcium-sensitivity to striated muscle actomyosin ATPase activity. This chain is Troponin I, slow skeletal muscle (TNNI1), found in Oryctolagus cuniculus (Rabbit).